Consider the following 395-residue polypeptide: S-adenosylmethionine synthase (395 aa).

Residue His16 coordinates ATP. Asp18 provides a ligand contact to Mg(2+). Glu44 provides a ligand contact to K(+). Residues Glu57 and Gln100 each coordinate L-methionine. Positions Gln100 to Asp110 are flexible loop. ATP is bound by residues Asp174–Lys176, Arg241–Phe242, Asp250, Arg256–Lys257, Ala273, and Lys277. Asp250 contributes to the L-methionine binding site. Position 281 (Lys281) interacts with L-methionine.

This sequence belongs to the AdoMet synthase family. As to quaternary structure, homotetramer; dimer of dimers. Requires Mg(2+) as cofactor. K(+) is required as a cofactor.

It is found in the cytoplasm. It carries out the reaction L-methionine + ATP + H2O = S-adenosyl-L-methionine + phosphate + diphosphate. It functions in the pathway amino-acid biosynthesis; S-adenosyl-L-methionine biosynthesis; S-adenosyl-L-methionine from L-methionine: step 1/1. Its function is as follows. Catalyzes the formation of S-adenosylmethionine (AdoMet) from methionine and ATP. The overall synthetic reaction is composed of two sequential steps, AdoMet formation and the subsequent tripolyphosphate hydrolysis which occurs prior to release of AdoMet from the enzyme. This Lactiplantibacillus plantarum (strain ATCC BAA-793 / NCIMB 8826 / WCFS1) (Lactobacillus plantarum) protein is S-adenosylmethionine synthase.